A 285-amino-acid chain; its full sequence is Pyrroline-5-carboxylate reductase (285 aa).

It belongs to the pyrroline-5-carboxylate reductase family. Homotetramer.

It catalyses the reaction L-proline + NADP(+) = (S)-1-pyrroline-5-carboxylate + NADPH + 2 H(+). It carries out the reaction L-proline + NAD(+) = (S)-1-pyrroline-5-carboxylate + NADH + 2 H(+). The protein operates within amino-acid biosynthesis; L-proline biosynthesis; L-proline from L-glutamate 5-semialdehyde: step 1/1. This is Pyrroline-5-carboxylate reductase from Kluyveromyces lactis (strain ATCC 8585 / CBS 2359 / DSM 70799 / NBRC 1267 / NRRL Y-1140 / WM37) (Yeast).